The following is a 176-amino-acid chain: NAD(P)H-quinone oxidoreductase subunit 6, chloroplastic (176 aa).

Transmembrane regions (helical) follow at residues 10–30 (ILLV…VLLT), 32–52 (PIYS…FHIP), 61–81 (AQLL…VMFM), 107–127 (ILFS…IWTT), and 152–172 (FYLP…GAIA).

It belongs to the complex I subunit 6 family. As to quaternary structure, NDH is composed of at least 16 different subunits, 5 of which are encoded in the nucleus.

It is found in the plastid. The protein localises to the chloroplast thylakoid membrane. It carries out the reaction a plastoquinone + NADH + (n+1) H(+)(in) = a plastoquinol + NAD(+) + n H(+)(out). The enzyme catalyses a plastoquinone + NADPH + (n+1) H(+)(in) = a plastoquinol + NADP(+) + n H(+)(out). In terms of biological role, NDH shuttles electrons from NAD(P)H:plastoquinone, via FMN and iron-sulfur (Fe-S) centers, to quinones in the photosynthetic chain and possibly in a chloroplast respiratory chain. The immediate electron acceptor for the enzyme in this species is believed to be plastoquinone. Couples the redox reaction to proton translocation, and thus conserves the redox energy in a proton gradient. The sequence is that of NAD(P)H-quinone oxidoreductase subunit 6, chloroplastic (ndhG) from Calycanthus floridus var. glaucus (Eastern sweetshrub).